We begin with the raw amino-acid sequence, 333 residues long: L-lactate dehydrogenase B chain (333 aa).

NAD(+) contacts are provided by residues 29 to 57 and Arg-99; that span reads GQVGMACAVSILGKGLCDELALVDVLEDK. Residues Arg-106, Asn-138, and Arg-169 each contribute to the substrate site. Asn-138 lines the NAD(+) pocket. His-193 (proton acceptor) is an active-site residue. Position 248 (Thr-248) interacts with substrate.

It belongs to the LDH/MDH superfamily. LDH family. As to quaternary structure, homotetramer.

The protein localises to the cytoplasm. The enzyme catalyses (S)-lactate + NAD(+) = pyruvate + NADH + H(+). The protein operates within fermentation; pyruvate fermentation to lactate; (S)-lactate from pyruvate: step 1/1. Interconverts simultaneously and stereospecifically pyruvate and lactate with concomitant interconversion of NADH and NAD(+). This chain is L-lactate dehydrogenase B chain (LDHB), found in Anas platyrhynchos (Mallard).